We begin with the raw amino-acid sequence, 741 residues long: Condensin complex subunit 2 (741 aa).

The tract at residues 1 to 67 (MGPPGPALPA…NDDEKERLQR (67 aa)) is disordered. 3 positions are modified to phosphoserine: S15, S25, and S28. Phosphothreonine is present on T49. Phosphoserine occurs at positions 70, 78, 81, 87, 89, 92, 96, 201, and 233. Positions 361-377 (CGDFPDGSLGDDFDAND) are enriched in acidic residues. Residues 361 to 383 (CGDFPDGSLGDDFDANDEPDHTA) form a disordered region. S432 bears the Phosphoserine mark. The segment at 447-467 (FRPRRKQDAPSQSENKKKSTK) is disordered. K488 participates in a covalent cross-link: Glycyl lysine isopeptide (Lys-Gly) (interchain with G-Cter in SUMO2). S496 is modified (phosphoserine). Phosphothreonine is present on residues T598 and T605. K637 bears the N6-acetyllysine mark.

Belongs to the CND2 (condensin subunit 2) family. Component of the condensin complex, which contains the SMC2 and SMC4 heterodimer, and three non SMC subunits that probably regulate the complex: NCAPH/BRRN1, NCAPD2/CAPD2 and NCAPG. Phosphorylated by CDK1. Its phosphorylation, as well as that of NCAPD2 and NCAPG subunits, activates the condensin complex and is required for chromosome condensation. As to expression, widely expressed at low level. Expressed in proliferating cells.

The protein localises to the nucleus. Its subcellular location is the cytoplasm. It is found in the chromosome. In terms of biological role, regulatory subunit of the condensin complex, a complex required for conversion of interphase chromatin into mitotic-like condense chromosomes. The condensin complex probably introduces positive supercoils into relaxed DNA in the presence of type I topoisomerases and converts nicked DNA into positive knotted forms in the presence of type II topoisomerases. Early in neurogenesis, may play an essential role to ensure accurate mitotic chromosome condensation in neuron stem cells, ultimately affecting neuron pool and cortex size. The chain is Condensin complex subunit 2 from Homo sapiens (Human).